Consider the following 558-residue polypeptide: Glutamine--tRNA ligase (558 aa).

The 'HIGH' region motif lies at 36–46 (PEPNGYLHLGH). ATP-binding positions include 37-39 (EPN) and 43-49 (HLGHAKS). Residues D69 and Y214 each coordinate L-glutamine. ATP-binding positions include T233, 263–264 (RL), and 271–273 (LSK). The short motif at 270 to 274 (LLSKR) is the 'KMSKS' region element.

Belongs to the class-I aminoacyl-tRNA synthetase family. Monomer.

It localises to the cytoplasm. It carries out the reaction tRNA(Gln) + L-glutamine + ATP = L-glutaminyl-tRNA(Gln) + AMP + diphosphate. In Nitrobacter hamburgensis (strain DSM 10229 / NCIMB 13809 / X14), this protein is Glutamine--tRNA ligase.